A 545-amino-acid polypeptide reads, in one-letter code: MAAKEVKFGRSAREKMLRGVDILADAVKVTLGPKGRNVVIDKSFGAPRITKDGVTVAKEIELEDKFENMGAQMVREVASKTNDIAGDGTTTATVLAQAIVREGAKAVAAGMNPMDLKRGIDLAVAEVVKDLLAKAKKINTSDEVAQVGTISANGEKQIGLDIAEAMQKVGNEGVITVEEAKTAETELEVVEGMQFDRGYLSPYFVTNPEKMVADLEDAFILLHEKKLSNLQAMLPVLEAVVQTGKPLLIIAEDVEGEALATLVVNKLRGGLKIAAVKAPGFGDRRKAMLEDIAILTGGTVISEDLGIKLESVTLDMLGRAKKVSITKENTTIVDGAGQKSDIEGRVAQIKAQIEETTSDYDREKLQERLAKLAGGVAVIRVGGATEVEVKEKKDRIDDALNATRAAVQEGIVPGGGVALLRSSVKITVKGENDDQDAGVNIVRRALQSPARQIVENAGDEASIVVGKILEKNTDDFGYNAQTGEYGDMIAMGIIDPVKVVRTALQDAASVASLLITTEAMIAELPKKDAPAMPGGMGGMGGMDMM.

ATP contacts are provided by residues 30–33 (TLGP), lysine 51, 87–91 (DGTTT), glycine 415, and aspartate 495.

Belongs to the chaperonin (HSP60) family. As to quaternary structure, forms a cylinder of 14 subunits composed of two heptameric rings stacked back-to-back. Interacts with the co-chaperonin GroES.

Its subcellular location is the cytoplasm. It carries out the reaction ATP + H2O + a folded polypeptide = ADP + phosphate + an unfolded polypeptide.. In terms of biological role, together with its co-chaperonin GroES, plays an essential role in assisting protein folding. The GroEL-GroES system forms a nano-cage that allows encapsulation of the non-native substrate proteins and provides a physical environment optimized to promote and accelerate protein folding. The chain is Chaperonin GroEL 4 from Rhizobium meliloti (strain 1021) (Ensifer meliloti).